The chain runs to 188 residues: Photosystem I assembly protein Ycf4 (188 aa).

Transmembrane regions (helical) follow at residues Y26–S46 and L68–I88.

Belongs to the Ycf4 family.

Its subcellular location is the cellular thylakoid membrane. Its function is as follows. Seems to be required for the assembly of the photosystem I complex. The protein is Photosystem I assembly protein Ycf4 of Synechococcus sp. (strain ATCC 27144 / PCC 6301 / SAUG 1402/1) (Anacystis nidulans).